A 462-amino-acid chain; its full sequence is tRNA(Ile)-lysidine synthase (462 aa).

31 to 36 contributes to the ATP binding site; sequence SGGRDS.

The protein belongs to the tRNA(Ile)-lysidine synthase family.

Its subcellular location is the cytoplasm. It carries out the reaction cytidine(34) in tRNA(Ile2) + L-lysine + ATP = lysidine(34) in tRNA(Ile2) + AMP + diphosphate + H(+). Its function is as follows. Ligates lysine onto the cytidine present at position 34 of the AUA codon-specific tRNA(Ile) that contains the anticodon CAU, in an ATP-dependent manner. Cytidine is converted to lysidine, thus changing the amino acid specificity of the tRNA from methionine to isoleucine. The polypeptide is tRNA(Ile)-lysidine synthase (Ralstonia nicotianae (strain ATCC BAA-1114 / GMI1000) (Ralstonia solanacearum)).